The primary structure comprises 597 residues: Inactive metallocarboxypeptidase ECM14 (597 aa).

Positions 1–21 (MRLFTHGQVLALLAFVNTISA) are cleaved as a signal peptide. Residues 22 to 174 (TPSFSTNSYP…QTIYESYPSP (153 aa)) constitute a propeptide that is removed on maturation. Positions 170–179 (SYPSPSQSPS) are enriched in low complexity. The segment at 170 to 189 (SYPSPSQSPSGRERGFLPSG) is disordered. One can recognise a Peptidase M14 domain in the interval 202-522 (NYQPLSVIVP…NAVMMLGRFL (321 aa)). Positions 264 and 267 each coordinate Zn(2+). Substrate contacts are provided by residues 264–267 (HARE), R322, and 339–340 (DR). A disulfide bridge connects residues C333 and C356. N349 is a glycosylation site (N-linked (GlcNAc...) asparagine). H396 lines the Zn(2+) pocket. Position 397 to 398 (397 to 398 (SY)) interacts with substrate. The interval 543-597 (KDDKPILNDDDDDDADTNDDGIGRKDDSWIPDEYKGDNDRDESDGGWAFRRLRKR) is disordered. The segment covering 550–561 (NDDDDDDADTND) has biased composition (acidic residues). Basic and acidic residues predominate over residues 563 to 580 (GIGRKDDSWIPDEYKGDN).

The protein belongs to the peptidase M14 family. It depends on Zn(2+) as a cofactor.

It localises to the vacuole. Its subcellular location is the secreted. Functionally, inactive carboxypeptidase that may play a role in cell wall organization and biogenesis. This Ajellomyces capsulatus (strain G186AR / H82 / ATCC MYA-2454 / RMSCC 2432) (Darling's disease fungus) protein is Inactive metallocarboxypeptidase ECM14 (ECM14).